A 448-amino-acid polypeptide reads, in one-letter code: tRNA(Ile)-lysidine synthase (448 aa).

25–30 (SGGSDS) lines the ATP pocket.

Belongs to the tRNA(Ile)-lysidine synthase family.

It is found in the cytoplasm. The catalysed reaction is cytidine(34) in tRNA(Ile2) + L-lysine + ATP = lysidine(34) in tRNA(Ile2) + AMP + diphosphate + H(+). Its function is as follows. Ligates lysine onto the cytidine present at position 34 of the AUA codon-specific tRNA(Ile) that contains the anticodon CAU, in an ATP-dependent manner. Cytidine is converted to lysidine, thus changing the amino acid specificity of the tRNA from methionine to isoleucine. This is tRNA(Ile)-lysidine synthase from Brucella melitensis biotype 2 (strain ATCC 23457).